The primary structure comprises 158 residues: Nuclear cap-binding protein subunit 2 (158 aa).

MRNA is bound by residues Y17, Y40, 109 to 113, 120 to 124, and 130 to 131; these read RADWD, RQYGR, and QV. Residues 37 to 115 form the RRM domain; it reads CTLYVGNLSY…RVIRADWDAG (79 aa). The tract at residues 123-158 is disordered; sequence GRGKHGGQVRDEYRKDYDPERGGYNRAIAQKGGDRQ. Basic and acidic residues predominate over residues 130-145; sequence QVRDEYRKDYDPERGG.

Belongs to the RRM NCBP2 family. Component of the nuclear cap-binding complex (CBC), a heterodimer composed of ncbp-1 and ncbp-2 that interacts with m7GpppG-capped RNA.

The protein localises to the nucleus. Its function is as follows. Component of the cap-binding complex (CBC), which binds co-transcriptionally to the 5' cap of pre-mRNAs and is involved in various processes such as pre-mRNA splicing and RNA-mediated gene silencing (RNAi). The CBC complex is involved in miRNA-mediated RNA interference and is required for primary microRNAs (miRNAs) processing. In the CBC complex, ncbp-2 recognizes and binds capped RNAs (m7GpppG-capped RNA) but requires ncbp-1 to stabilize the movement of its N-terminal loop and lock the CBC into a high affinity cap-binding state with the cap structure. This chain is Nuclear cap-binding protein subunit 2 (ncbp-2), found in Caenorhabditis elegans.